We begin with the raw amino-acid sequence, 399 residues long: RNA polymerase sigma factor SigA1 (399 aa).

Residues 1 to 73 (MTQLISIDKE…DEDSVGEDED (73 aa)) form a disordered region. Over residues 60–73 (DAIDDEDSVGEDED) the composition is skewed to acidic residues. Positions 167–237 (MVQSNLRLVV…TRAIADQSRT (71 aa)) are sigma-70 factor domain-2. An Interaction with polymerase core subunit RpoC motif is present at residues 191–194 (DLIQ). The sigma-70 factor domain-3 stretch occupies residues 246 to 321 (ETISRIKKTT…EADGETPEDE (76 aa)). The segment at 334-387 (VLSTLSPRERDVLRLRYGLDDGRMKTLEEIGQLFNVTRERIRQIEAKALRKLRH) is sigma-70 factor domain-4. The segment at residues 360-379 (LEEIGQLFNVTRERIRQIEA) is a DNA-binding region (H-T-H motif).

This sequence belongs to the sigma-70 factor family. RpoD/SigA subfamily. As to quaternary structure, interacts transiently with the RNA polymerase catalytic core.

It localises to the cytoplasm. Functionally, sigma factors are initiation factors that promote the attachment of RNA polymerase to specific initiation sites and are then released. This sigma factor is the primary sigma factor during exponential growth. In Synechococcus elongatus (strain ATCC 33912 / PCC 7942 / FACHB-805) (Anacystis nidulans R2), this protein is RNA polymerase sigma factor SigA1.